The following is a 734-amino-acid chain: Protein arginine N-methyltransferase 5 (734 aa).

The span at 1–16 (MSNRTYADNLFPQQVA) shows a compositional bias: polar residues. The tract at residues 1–39 (MSNRTYADNLFPQQVAEQHEEQMSSGSSPKSNSPSRSIS) is disordered. Positions 24–39 (SSGSSPKSNSPSRSIS) are enriched in low complexity. The tract at residues 42–329 (EAANSRIHIG…EYSQALRHAV (288 aa)) is TIM barrel. Positions 360–706 (LQAPLQPLSE…VDNTGVWYEW (347 aa)) constitute an SAM-dependent MTase PRMT-type domain. Tyr376 contacts S-adenosyl-L-methionine. Residue Phe379 coordinates a protein. Residues 385–386 (KY), Glu450, and 477–478 (DM) each bind S-adenosyl-L-methionine. A protein contacts are provided by Glu499 and Glu508. Residues Glu499 and Glu508 each act as proton donor/acceptor in the active site. A beta barrel region spans residues 529–734 (PQKYTSYVKP…PNGESYYMRM (206 aa)). Positions 541–589 (STHIHQTIKAQSIPYLSRAIPSHGRGEPELDEDEMWIQKYPQGHVRNNM) are dimerization.

It belongs to the class I-like SAM-binding methyltransferase superfamily. Protein arginine N-methyltransferase family. Homodimer. Interacts with cep-1 (via C-terminus domain); does not methylate cep-1. Interacts with cbp-1 (via N-terminus domain and HAT domain); the interaction results in methylation of cbp-1. Component of a complex that contains cep-1 and cbp-1. May interact with pid-2, pid-4 and pid-5.

It localises to the nucleus. The catalysed reaction is L-arginyl-[protein] + 2 S-adenosyl-L-methionine = N(omega),N(omega)'-dimethyl-L-arginyl-[protein] + 2 S-adenosyl-L-homocysteine + 2 H(+). In terms of biological role, catalyzes the symmetrical dimethylation of arginine residues in targets such as small nuclear ribonucleoproteins, histone H2A/H4 and cbp-1. Dimethylation occurs in a distributive manner where the protein is released after the addition of the first methyl group prior to rebinding for the addition of the second methyl group. Plays a role in the negative regulation of DNA damage-induced apoptosis. By methylating cbp-1, may prevent apoptosis by repressing the capacity of cbp-1 to enhance cep-1 dependent transcription activation of the programmed cell death activator egl-1. Plays a role in heat and oxidative stress resistance. This is Protein arginine N-methyltransferase 5 from Caenorhabditis elegans.